Here is a 691-residue protein sequence, read N- to C-terminus: DNA ligase (691 aa).

NAD(+) contacts are provided by residues 41–45 (DAEYD), 90–91 (SL), and Glu-130. Lys-132 (N6-AMP-lysine intermediate) is an active-site residue. Arg-153, Glu-190, Lys-307, and Lys-331 together coordinate NAD(+). Zn(2+)-binding residues include Cys-425, Cys-428, Cys-443, and Cys-449. In terms of domain architecture, BRCT spans 610–691 (APQGVLAGKT…LHQLLEGNTP (82 aa)).

The protein belongs to the NAD-dependent DNA ligase family. LigA subfamily. It depends on Mg(2+) as a cofactor. Mn(2+) is required as a cofactor.

The enzyme catalyses NAD(+) + (deoxyribonucleotide)n-3'-hydroxyl + 5'-phospho-(deoxyribonucleotide)m = (deoxyribonucleotide)n+m + AMP + beta-nicotinamide D-nucleotide.. DNA ligase that catalyzes the formation of phosphodiester linkages between 5'-phosphoryl and 3'-hydroxyl groups in double-stranded DNA using NAD as a coenzyme and as the energy source for the reaction. It is essential for DNA replication and repair of damaged DNA. The polypeptide is DNA ligase (Burkholderia ambifaria (strain ATCC BAA-244 / DSM 16087 / CCUG 44356 / LMG 19182 / AMMD) (Burkholderia cepacia (strain AMMD))).